Here is a 301-residue protein sequence, read N- to C-terminus: Methionyl-tRNA formyltransferase (301 aa).

(6S)-5,6,7,8-tetrahydrofolate is bound at residue 109–112 (SLLP).

This sequence belongs to the Fmt family.

The enzyme catalyses L-methionyl-tRNA(fMet) + (6R)-10-formyltetrahydrofolate = N-formyl-L-methionyl-tRNA(fMet) + (6S)-5,6,7,8-tetrahydrofolate + H(+). In terms of biological role, attaches a formyl group to the free amino group of methionyl-tRNA(fMet). The formyl group appears to play a dual role in the initiator identity of N-formylmethionyl-tRNA by promoting its recognition by IF2 and preventing the misappropriation of this tRNA by the elongation apparatus. This Ruegeria pomeroyi (strain ATCC 700808 / DSM 15171 / DSS-3) (Silicibacter pomeroyi) protein is Methionyl-tRNA formyltransferase.